Consider the following 88-residue polypeptide: Protein WIR1A (88 aa).

Over 1-13 (MASLGSSAGGRRP) the chain is Cytoplasmic. A helical membrane pass occupies residues 14-35 (TVLLQIALFVVVAAIIINSSVC). Residues 36–88 (LGATAVHDAAASGTGALDPNVPAVPTPGGAGQPYTGRGCRTVYGCRPPAGGQP) are Extracellular-facing.

Its subcellular location is the membrane. Its function is as follows. Associated with pathogen defense. In Triticum aestivum (Wheat), this protein is Protein WIR1A (WIR1A).